The primary structure comprises 328 residues: MHNSATEFLKPRLVDIEQISKTHAKITLEPLERGFGHTLGNALRRILLSSMPGYAVTEVEIDGILHEYSSKEGVQEDIVEILLNLKELALIIKGKDIAVLSLFKSGIGKVTASDIIHDGNVEICHPEHVLCNLTHENSSINMRIKVQKGRGYVPAISRMHIEDRPIGRLLLDACYSPIERISYNVEAARVEQRTDLDKLIIEMETNGTIDPESAIRRAATILSEQLEAFIDLRDIRKPEIKEEKPEFDPVLLRPVDDLELTVRSANCLKAESIHYIGDLVQRTEVELLKTPNLGKKSLTEIKDVLSTRNLTLGMRIENWPPVSILKND.

Residues 1–233 are alpha N-terminal domain (alpha-NTD); it reads MHNSATEFLK…EQLEAFIDLR (233 aa). Residues 247–328 are alpha C-terminal domain (alpha-CTD); the sequence is FDPVLLRPVD…WPPVSILKND (82 aa).

This sequence belongs to the RNA polymerase alpha chain family. Homodimer. The RNAP catalytic core consists of 2 alpha, 1 beta, 1 beta' and 1 omega subunit. When a sigma factor is associated with the core the holoenzyme is formed, which can initiate transcription.

The enzyme catalyses RNA(n) + a ribonucleoside 5'-triphosphate = RNA(n+1) + diphosphate. In terms of biological role, DNA-dependent RNA polymerase catalyzes the transcription of DNA into RNA using the four ribonucleoside triphosphates as substrates. This Wigglesworthia glossinidia brevipalpis protein is DNA-directed RNA polymerase subunit alpha.